Here is a 296-residue protein sequence, read N- to C-terminus: 33 kDa chaperonin (296 aa).

2 disulfides stabilise this stretch: Cys238/Cys240 and Cys271/Cys274.

The protein belongs to the HSP33 family. Post-translationally, under oxidizing conditions two disulfide bonds are formed involving the reactive cysteines. Under reducing conditions zinc is bound to the reactive cysteines and the protein is inactive.

It is found in the cytoplasm. Functionally, redox regulated molecular chaperone. Protects both thermally unfolding and oxidatively damaged proteins from irreversible aggregation. Plays an important role in the bacterial defense system toward oxidative stress. The sequence is that of 33 kDa chaperonin from Clostridium botulinum (strain Loch Maree / Type A3).